The following is a 296-amino-acid chain: Ribosomal RNA small subunit methyltransferase A (296 aa).

Positions 28, 30, 55, 77, 103, and 122 each coordinate S-adenosyl-L-methionine.

Belongs to the class I-like SAM-binding methyltransferase superfamily. rRNA adenine N(6)-methyltransferase family. RsmA subfamily.

It localises to the cytoplasm. It catalyses the reaction adenosine(1518)/adenosine(1519) in 16S rRNA + 4 S-adenosyl-L-methionine = N(6)-dimethyladenosine(1518)/N(6)-dimethyladenosine(1519) in 16S rRNA + 4 S-adenosyl-L-homocysteine + 4 H(+). Functionally, specifically dimethylates two adjacent adenosines (A1518 and A1519) in the loop of a conserved hairpin near the 3'-end of 16S rRNA in the 30S particle. May play a critical role in biogenesis of 30S subunits. In Sinorhizobium fredii (strain NBRC 101917 / NGR234), this protein is Ribosomal RNA small subunit methyltransferase A.